The following is a 448-amino-acid chain: 5-hydroxytryptamine receptor 7 (448 aa).

The Extracellular segment spans residues 1–86; it reads MMDVNSSGRP…INYGRVEKVV (86 aa). N-linked (GlcNAc...) asparagine glycosylation is found at N5 and N69. Residues 87–111 traverse the membrane as a helical segment; sequence IGSILTLITLLTIAGNCLVVISVCF. At 112–121 the chain is on the cytoplasmic side; sequence VKKLRQPSNY. The chain crosses the membrane as a helical span at residues 122–143; the sequence is LIVSLALADLSVAVAVMPFVSV. Topologically, residues 144–155 are extracellular; it reads TDLIGGKWIFGH. A helical transmembrane segment spans residues 156 to 181; that stretch reads FFCNVFIAMDVMCCTASIMTLCVISI. C158 and C234 form a disulfide bridge. D165 contributes to the serotonin binding site. Topologically, residues 182–201 are cytoplasmic; that stretch reads DRYLGITRPLTYPVRQNGKC. The chain crosses the membrane as a helical span at residues 202–222; it reads MAKMILSVWLLSASITLPPLF. The Extracellular segment spans residues 223–240; it reads GWAQNVNDDKVCLISQDF. The chain crosses the membrane as a helical span at residues 241–263; it reads GYTIYSTAVAFYIPMSVMLFMYY. Residues 264–329 are Cytoplasmic-facing; sequence QIYKAARKSA…SIFKREQKAA (66 aa). A helical membrane pass occupies residues 330–355; that stretch reads TTLGIIVGAFTVCWLPFFLLSTARPF. The Extracellular portion of the chain corresponds to 356–366; that stretch reads ICGTSCSCIPL. Residues 367 to 390 traverse the membrane as a helical segment; sequence WVERTCLWLGYANSLINPFIYAFF. The Cytoplasmic segment spans residues 391 to 448; the sequence is NRDLRTTYRSLLQCQYRNINRKLSAAGMHEALKLAERPERSEFVLQNCDHCGKKGHDT. C404 carries S-palmitoyl cysteine lipidation.

It belongs to the G-protein coupled receptor 1 family.

The protein localises to the cell membrane. Its function is as follows. G-protein coupled receptor for 5-hydroxytryptamine (serotonin), a biogenic hormone that functions as a neurotransmitter, a hormone and a mitogen. Ligand binding causes a conformation change that triggers signaling via guanine nucleotide-binding proteins (G proteins) and modulates the activity of downstream effectors. HTR7 is coupled to G(s) G alpha proteins and mediates activation of adenylate cyclase activity. This chain is 5-hydroxytryptamine receptor 7 (Htr7), found in Mus musculus (Mouse).